A 109-amino-acid chain; its full sequence is Tetracenomycin F2 cyclase (109 aa).

As to quaternary structure, homodimer.

It carries out the reaction tetracenomycin F2 + H(+) = tetracenomycin F1 + H2O. It participates in antibiotic biosynthesis; tetracenomycin C biosynthesis. Catalyzing the conversion of tetracenomycin F2 to tetracenomycin F1. The sequence is that of Tetracenomycin F2 cyclase (tcmI) from Streptomyces glaucescens.